The sequence spans 207 residues: dTTP/UTP pyrophosphatase (207 aa).

The active-site Proton acceptor is Asp-87.

It belongs to the Maf family. YhdE subfamily. Requires a divalent metal cation as cofactor.

It is found in the cytoplasm. It carries out the reaction dTTP + H2O = dTMP + diphosphate + H(+). The enzyme catalyses UTP + H2O = UMP + diphosphate + H(+). In terms of biological role, nucleoside triphosphate pyrophosphatase that hydrolyzes dTTP and UTP. May have a dual role in cell division arrest and in preventing the incorporation of modified nucleotides into cellular nucleic acids. The polypeptide is dTTP/UTP pyrophosphatase (Bordetella pertussis (strain Tohama I / ATCC BAA-589 / NCTC 13251)).